We begin with the raw amino-acid sequence, 1088 residues long: RNA-directed RNA polymerase (1088 aa).

A RdRp catalytic domain is found at 501 to 687 (LSYGDVTRFL…AKRYIAGGKI (187 aa)).

Belongs to the reoviridae RNA-directed RNA polymerase family. In terms of assembly, interacts with VP3 (Potential). Interacts with VP2; this interaction activates VP1. Interacts with NSP5; this interaction is probably necessary for the formation of functional virus factories. Interacts with NSP2; this interaction is weak. It depends on Mg(2+) as a cofactor.

The protein resides in the virion. The enzyme catalyses RNA(n) + a ribonucleoside 5'-triphosphate = RNA(n+1) + diphosphate. Functionally, RNA-directed RNA polymerase that is involved in both transcription and genome replication. Together with VP3 capping enzyme, forms an enzyme complex positioned near the channels situated at each of the five-fold vertices of the core. Following infection, the outermost layer of the virus is lost, leaving a double-layered particle (DLP) made up of the core and VP6 shell. VP1 then catalyzes the transcription of fully conservative plus-strand genomic RNAs that are extruded through the DLP's channels into the cytoplasm where they function as mRNAs for translation of viral proteins. One copy of each of the viral (+)RNAs is also recruited during core assembly, together with newly synthesized polymerase complexes and VP2. The polymerase of these novo-formed particles catalyzes the synthesis of complementary minus-strands leading to dsRNA formation. To do so, the polymerase specifically recognizes and binds 4 bases 5'-UGUG-3' in the conserved 3'-sequence of plus-strand RNA templates. VP2 presumably activates the autoinhibited VP1-RNA complex to coordinate packaging and genome replication. Once dsRNA synthesis is complete, the polymerase switches to the transcriptional mode, thus providing secondary transcription. This is RNA-directed RNA polymerase from Homo sapiens (Human).